The following is an 81-amino-acid chain: Protein RALF-like 7 (81 aa).

Positions 1–29 (MSARKKNRIHVFFVSIMIIISLVSGFGEG) are cleaved as a signal peptide. Cystine bridges form between Cys-46–Cys-54 and Cys-66–Cys-72.

It belongs to the plant rapid alkalinization factor (RALF) family.

It localises to the secreted. Its function is as follows. Cell signaling peptide that may regulate plant stress, growth, and development. Mediates a rapid alkalinization of extracellular space by mediating a transient increase in the cytoplasmic Ca(2+) concentration leading to a calcium-dependent signaling events through a cell surface receptor and a concomitant activation of some intracellular mitogen-activated protein kinases. This is Protein RALF-like 7 (RALFL7) from Arabidopsis thaliana (Mouse-ear cress).